A 95-amino-acid chain; its full sequence is Defensin alpha 4 (95 aa).

A signal peptide spans 1–19 (MRTLALLAAILLVALQAQA). Positions 20-62 (EHISVSIDEVVDQQPPQAEDQDVAIYVKEHESSALEALGVKAG) are excised as a propeptide. Cystine bridges form between C65-C93, C67-C82, and C72-C92.

It belongs to the alpha-defensin family.

It is found in the secreted. Host-defense peptide that has antimicrobial activity. Inhibits corticotropin (ACTH)-stimulated corticosterone production (in vitro). This is Defensin alpha 4 from Oryctolagus cuniculus (Rabbit).